Consider the following 400-residue polypeptide: uncharacterized protein (400 aa).

36–43 (GSINSGKT) is a binding site for ATP.

Belongs to the archaeal ATPase family.

This is an uncharacterized protein from Methanocaldococcus jannaschii (strain ATCC 43067 / DSM 2661 / JAL-1 / JCM 10045 / NBRC 100440) (Methanococcus jannaschii).